We begin with the raw amino-acid sequence, 570 residues long: Urease subunit alpha (570 aa).

Ni(2+)-binding residues include His137, His139, and Lys220. Lys220 carries the post-translational modification N6-carboxylysine. His222 serves as a coordination point for substrate. Residues His249 and His275 each coordinate Ni(2+). His323 serves as the catalytic Proton donor. Asp363 contacts Ni(2+).

This sequence belongs to the metallo-dependent hydrolases superfamily. Urease alpha subunit family. As to quaternary structure, heterotrimer of UreA (gamma), UreB (beta) and UreC (alpha) subunits. Three heterotrimers associate to form the active enzyme. It depends on Ni cation as a cofactor. Post-translationally, carboxylation allows a single lysine to coordinate two nickel ions.

It is found in the cytoplasm. The enzyme catalyses urea + 2 H2O + H(+) = hydrogencarbonate + 2 NH4(+). It functions in the pathway nitrogen metabolism; urea degradation; CO(2) and NH(3) from urea (urease route): step 1/1. This Lachnoclostridium phytofermentans (strain ATCC 700394 / DSM 18823 / ISDg) (Clostridium phytofermentans) protein is Urease subunit alpha.